Reading from the N-terminus, the 257-residue chain is Anamorsin homolog (257 aa).

Residues 1–134 are N-terminal SAM-like domain; the sequence is MSDRKNVLFV…KVGSSDKVTL (134 aa). A linker region spans residues 135 to 168; it reads NPEMKENVVSAWKLDDNNSETISEDDLLEADDLI. The [2Fe-2S] cluster site is built by cysteine 178, cysteine 187, cysteine 190, and cysteine 192. The interval 178 to 192 is fe-S binding site A; the sequence is CATTKKAKACKDCSC. [4Fe-4S] cluster contacts are provided by cysteine 218, cysteine 221, cysteine 229, and cysteine 232. 2 short sequence motifs (cx2C motif) span residues 218–221 and 229–232; these read CGSC and CASC. The segment at 218-232 is fe-S binding site B; it reads CGSCYLGDAFRCASC.

The protein belongs to the anamorsin family. As to quaternary structure, monomer. [2Fe-2S] cluster serves as cofactor. Requires [4Fe-4S] cluster as cofactor.

It localises to the cytoplasm. The protein resides in the mitochondrion intermembrane space. In terms of biological role, component of the cytosolic iron-sulfur (Fe-S) protein assembly (CIA) machinery. Required for the maturation of extramitochondrial Fe-S proteins. Part of an electron transfer chain functioning in an early step of cytosolic Fe-S biogenesis, facilitating the de novo assembly of a [4Fe-4S] cluster on the cytosolic Fe-S scaffold complex. Electrons are transferred from NADPH via a FAD- and FMN-containing diflavin oxidoreductase. Together with the diflavin oxidoreductase, also required for the assembly of the diferric tyrosyl radical cofactor of ribonucleotide reductase (RNR), probably by providing electrons for reduction during radical cofactor maturation in the catalytic small subunit. The sequence is that of Anamorsin homolog from Acyrthosiphon pisum (Pea aphid).